The chain runs to 483 residues: Salicylaldehyde dehydrogenase (483 aa).

228–233 (GSTRVG) lines the NAD(+) pocket. Active-site residues include Glu-250 and Cys-284.

Belongs to the aldehyde dehydrogenase family.

It catalyses the reaction salicylaldehyde + NAD(+) + H2O = salicylate + NADH + 2 H(+). The protein operates within aromatic compound metabolism; naphthalene degradation. This Pseudomonas putida (Arthrobacter siderocapsulatus) protein is Salicylaldehyde dehydrogenase (nahF).